A 103-amino-acid chain; its full sequence is N(4)-acetylcytidine amidohydrolase (103 aa).

The 96-residue stretch at 6-101 folds into the ASCH domain; that stretch reads ITFFQRFQDD…QTQFYVIEFK (96 aa). Lysine 21 (proton acceptor) is an active-site residue. Catalysis depends on threonine 24, which acts as the Nucleophile. Glutamate 74 (proton donor) is an active-site residue.

The protein belongs to the N(4)-acetylcytidine amidohydrolase family.

It carries out the reaction N(4)-acetylcytidine + H2O = cytidine + acetate + H(+). The catalysed reaction is N(4)-acetyl-2'-deoxycytidine + H2O = 2'-deoxycytidine + acetate + H(+). The enzyme catalyses N(4)-acetylcytosine + H2O = cytosine + acetate + H(+). Catalyzes the hydrolysis of N(4)-acetylcytidine (ac4C). This chain is N(4)-acetylcytidine amidohydrolase (yqfB), found in Escherichia coli (strain K12 / MC4100 / BW2952).